The primary structure comprises 271 residues: Extracellular metalloprotease ARB_05317 (271 aa).

An N-terminal signal peptide occupies residues 1–19 (MRFSVLLTGLAAAGSIATA). A glycan (N-linked (GlcNAc...) asparagine) is linked at Asn136. His185 provides a ligand contact to Zn(2+). The active site involves Glu186. Zn(2+) is bound at residue His189. N-linked (GlcNAc...) asparagine glycosylation occurs at Asn200. Cysteines 222 and 248 form a disulfide.

This sequence belongs to the peptidase M43B family.

It is found in the secreted. Secreted metalloproteinase that allows assimilation of proteinaceous substrates. Plays a pivotal role as a pathogenicity determinant during infections and contributes to the ability of the pathogen to persist within the mammalian host. The protein is Extracellular metalloprotease ARB_05317 of Arthroderma benhamiae (strain ATCC MYA-4681 / CBS 112371) (Trichophyton mentagrophytes).